The chain runs to 447 residues: Nisin biosynthesis sensor protein NisK (447 aa).

2 helical membrane-spanning segments follow: residues V15–F35 and T147–I167. Residues A235–K447 form the Histidine kinase domain. H238 is modified (phosphohistidine; by autocatalysis).

The protein localises to the cell membrane. The enzyme catalyses ATP + protein L-histidine = ADP + protein N-phospho-L-histidine.. Functionally, member of the two-component regulatory system NisK/NisR involved in the regulation of the biosynthesis of lantibiotic nisin. NisK may function as a membrane-associated protein kinase that phosphorylates NisR in response to environmental signals. The polypeptide is Nisin biosynthesis sensor protein NisK (nisK) (Lactococcus lactis subsp. lactis (Streptococcus lactis)).